The primary structure comprises 414 residues: 3-phosphoshikimate 1-carboxyvinyltransferase (414 aa).

3-phosphoshikimate-binding residues include Lys-20, Ser-21, and Arg-25. Lys-20 is a binding site for phosphoenolpyruvate. 2 residues coordinate phosphoenolpyruvate: Gly-85 and Arg-113. Residues Ser-154, Ser-155, Gln-156, Ser-181, Asp-296, and Lys-323 each coordinate 3-phosphoshikimate. A phosphoenolpyruvate-binding site is contributed by Gln-156. Asp-296 acts as the Proton acceptor in catalysis. Residues Arg-327, Arg-371, and Lys-395 each contribute to the phosphoenolpyruvate site.

This sequence belongs to the EPSP synthase family. As to quaternary structure, monomer.

It localises to the cytoplasm. The catalysed reaction is 3-phosphoshikimate + phosphoenolpyruvate = 5-O-(1-carboxyvinyl)-3-phosphoshikimate + phosphate. It participates in metabolic intermediate biosynthesis; chorismate biosynthesis. Functionally, catalyzes the transfer of the enolpyruvyl moiety of phosphoenolpyruvate (PEP) to the 5-hydroxyl of shikimate-3-phosphate (S3P) to produce enolpyruvyl shikimate-3-phosphate and inorganic phosphate. This is 3-phosphoshikimate 1-carboxyvinyltransferase from Saccharolobus islandicus (strain M.14.25 / Kamchatka #1) (Sulfolobus islandicus).